Here is a 171-residue protein sequence, read N- to C-terminus: L-methionine sulfoximine/L-methionine sulfone acetyltransferase (171 aa).

The N-acetyltransferase domain maps to 1–163; the sequence is MTIRFADKAD…DLTFMQLQLD (163 aa). Substrate-binding positions include 72–74 and 82–84; these read RSF and EHS. Acetyl-CoA contacts are provided by residues 85–87, 93–98, asparagine 124, and serine 133; these read VYV and GKGLGR.

In terms of assembly, homodimer.

The catalysed reaction is L-methionine sulfoximine + acetyl-CoA = N-acetyl-L-methionine sulfoximine + CoA + H(+). It catalyses the reaction L-methionine sulfone + acetyl-CoA = N-acetyl-L-methionine sulfone + CoA + H(+). Its function is as follows. Plays a role in the resistance against the toxic effects of L-methionine sulfoximine (MSX), a rare amino acid which inhibits glutamine synthetase (GlnA). Catalyzes the acetylation of MSX. It can also use L-methionine sulfone (MSO). Also catalyzes the acylation of free L-amino acids using an acyl-CoA as acyl donor. This Salmonella typhimurium (strain LT2 / SGSC1412 / ATCC 700720) protein is L-methionine sulfoximine/L-methionine sulfone acetyltransferase (yncA).